We begin with the raw amino-acid sequence, 614 residues long: Sodium- and chloride-dependent betaine transporter (614 aa).

The Cytoplasmic segment spans residues 1–44; it reads MDRKVAVHEDGYPVVSWVPEEGEMMDQKGKDQVKDRGQWTNKME. 3 helical membrane passes run 45-65, 73-92, and 117-137; these read FVLS…FPYL, AFFI…VFFL, and GIGM…IIIL. Residues 138–210 lie on the Extracellular side of the membrane; the sequence is AWALFYLFSS…SGIHDLGSLR (73 aa). An intrachain disulfide couples cysteine 157 to cysteine 166. Residues asparagine 171 and asparagine 183 are each glycosylated (N-linked (GlcNAc...) asparagine). Transmembrane regions (helical) follow at residues 211 to 229, 238 to 255, 291 to 308, 320 to 341, 374 to 393, 423 to 441, 458 to 478, 499 to 518, and 538 to 556; these read WELA…FCIW, VVYF…ILLI, IFFS…LGSY, IALC…FSIL, MPLS…FLGL, VLIL…LLVT, GICL…VYGA, ISWL…FSLS, and IGWL…FIII. Residues 557 to 614 lie on the Cytoplasmic side of the membrane; the sequence is TFLKTQGSFKKRLRRLITPDPSLPQPGRRPPQDGSSAQNCSSSPAKQELIAWEKETHL. A disordered region spans residues 574–602; it reads TPDPSLPQPGRRPPQDGSSAQNCSSSPAK. Residues 589 to 601 are compositionally biased toward polar residues; sequence DGSSAQNCSSSPA.

Belongs to the sodium:neurotransmitter symporter (SNF) (TC 2.A.22) family. SLC6A12 subfamily. Interacts with LIN7C. In terms of tissue distribution, predominantly expressed in the liver (sinusoidal hepatocyte plasma membranes), also present in the renal medulla, where it localizes to the basolateral membranes of collecting ducts (particularly at the papilla tip) and the thick ascending limbs of Henle (at protein level). Some expression is detected in the leptomeninges, but no expression is detected in brain parenchyma, brain blood vessels, ependymal cells, the renal cortex and the intestine.

It is found in the basolateral cell membrane. Its subcellular location is the cell membrane. The enzyme catalyses 4-aminobutanoate(out) + chloride(out) + 3 Na(+)(out) = 4-aminobutanoate(in) + chloride(in) + 3 Na(+)(in). It catalyses the reaction glycine betaine(out) + 2 chloride(out) + 3 Na(+)(out) = glycine betaine(in) + 2 chloride(in) + 3 Na(+)(in). Its function is as follows. Transporter that mediates cellular uptake of betaine and GABA in a sodium- and chloride-dependent process. May have a role in regulation of GABAergic transmission in the brain through the reuptake of GABA into presynaptic terminals, as well as in osmotic regulation. Probably also involved in renal and hepatic osmotic regulation. The protein is Sodium- and chloride-dependent betaine transporter (Slc6a12) of Mus musculus (Mouse).